The following is a 320-amino-acid chain: Peroxidase 66 (320 aa).

The first 29 residues, 1-29 (MAASVSASCLNRLSSLAVVLVALASAASA), serve as a signal peptide directing secretion. Gln30 carries the post-translational modification Pyrrolidone carboxylic acid. 4 disulfides stabilise this stretch: Cys40/Cys118, Cys73/Cys78, Cys124/Cys315, and Cys202/Cys227. Residue His71 is the Proton acceptor of the active site. Asp72, Val75, Gly77, Asp79, and Ser81 together coordinate Ca(2+). Residues Asn85 and Asn96 are each glycosylated (N-linked (GlcNAc...) asparagine). Pro165 lines the substrate pocket. Residue His195 coordinates heme b. Thr196 provides a ligand contact to Ca(2+). Asn211 carries an N-linked (GlcNAc...) asparagine glycan. Positions 239, 242, and 247 each coordinate Ca(2+).

Belongs to the peroxidase family. Classical plant (class III) peroxidase subfamily. Heme b serves as cofactor. The cofactor is Ca(2+).

It is found in the secreted. The enzyme catalyses 2 a phenolic donor + H2O2 = 2 a phenolic radical donor + 2 H2O. Removal of H(2)O(2), oxidation of toxic reductants, biosynthesis and degradation of lignin, suberization, auxin catabolism, response to environmental stresses such as wounding, pathogen attack and oxidative stress. These functions might be dependent on each isozyme/isoform in each plant tissue. This Zea mays (Maize) protein is Peroxidase 66 (PER66).